Consider the following 196-residue polypeptide: UMP-CMP kinase (196 aa).

Residue 13 to 18 (GAGKGT) participates in ATP binding. S33 is modified (phosphoserine). The interval 33–63 (SAGELLRDERKNPDSQYGELIEKYIKDGKIV) is NMP. R39 contributes to the a ribonucleoside 5'-phosphate binding site. K43 and K55 each carry N6-acetyllysine. Residues 61–63 (KIV) and 93–96 (GFPR) contribute to the a ribonucleoside 5'-phosphate site. N100 provides a ligand contact to CMP. An N6-succinyllysine modification is found at K106. The interval 133–143 (ERGKSSGRSDD) is LID. R134 contacts ATP. Residues R140 and R151 each coordinate a ribonucleoside 5'-phosphate. Position 179 (K179) interacts with ATP. A Phosphoserine modification is found at S180.

Belongs to the adenylate kinase family. UMP-CMP kinase subfamily. As to quaternary structure, monomer. Requires Mg(2+) as cofactor.

Its subcellular location is the nucleus. The protein localises to the cytoplasm. It catalyses the reaction CMP + ATP = CDP + ADP. It carries out the reaction dCMP + ATP = dCDP + ADP. The enzyme catalyses UMP + ATP = UDP + ADP. The catalysed reaction is a 2'-deoxyribonucleoside 5'-diphosphate + ATP = a 2'-deoxyribonucleoside 5'-triphosphate + ADP. It catalyses the reaction a ribonucleoside 5'-diphosphate + ATP = a ribonucleoside 5'-triphosphate + ADP. Functionally, catalyzes the phosphorylation of pyrimidine nucleoside monophosphates at the expense of ATP. Plays an important role in de novo pyrimidine nucleotide biosynthesis. Has preference for UMP and CMP as phosphate acceptors. Also displays broad nucleoside diphosphate kinase activity. This Sus scrofa (Pig) protein is UMP-CMP kinase.